The following is a 293-amino-acid chain: NAD kinase (293 aa).

Asp73 (proton acceptor) is an active-site residue. Residues Asp73–Gly74, Asn147–Glu148, Arg175, Asp177, and Thr188–Ser193 each bind NAD(+).

This sequence belongs to the NAD kinase family. It depends on a divalent metal cation as a cofactor.

It is found in the cytoplasm. It catalyses the reaction NAD(+) + ATP = ADP + NADP(+) + H(+). Functionally, involved in the regulation of the intracellular balance of NAD and NADP, and is a key enzyme in the biosynthesis of NADP. Catalyzes specifically the phosphorylation on 2'-hydroxyl of the adenosine moiety of NAD to yield NADP. The sequence is that of NAD kinase from Colwellia psychrerythraea (strain 34H / ATCC BAA-681) (Vibrio psychroerythus).